A 249-amino-acid polypeptide reads, in one-letter code: RING finger protein 223 (249 aa).

The segment at 1–44 is disordered; that stretch reads MSSGQQVWHTAVPPPRRSSSIASMPRSPSSAGSPRSPGTPGSER. A compositionally biased stretch (low complexity) spans 17 to 44; sequence RSSSIASMPRSPSSAGSPRSPGTPGSER. An RING-type zinc finger spans residues 51-102; that stretch reads CSICFSGYDNIFKTPKELSCTHVFCLECLARLAAAQPVGRPGGEAVPCPFCR. Residues 199–219 form a helical membrane-spanning segment; the sequence is LVSALLLMLFCVALWPVQCAL. A disordered region spans residues 230 to 249; the sequence is PPRPPATSTAASPLGPLTDN. Over residues 235 to 249 the composition is skewed to low complexity; it reads ATSTAASPLGPLTDN.

The protein localises to the membrane. The chain is RING finger protein 223 (RNF223) from Homo sapiens (Human).